A 343-amino-acid chain; its full sequence is Twinfilin (343 aa).

ADF-H domains are found at residues glutamine 4–valine 139 and glycine 177–histidine 312. Residues arginine 314 to glutamate 343 form a disordered region.

The protein belongs to the actin-binding proteins ADF family. Twinfilin subfamily. In terms of assembly, interacts with G-actin; ADP-actin form.

The protein localises to the cytoplasm. It localises to the cytoskeleton. The protein resides in the cell cortex. Actin-binding protein involved in motile and morphological processes. Inhibits actin polymerization, likely by sequestering G-actin. In Anopheles gambiae (African malaria mosquito), this protein is Twinfilin (twf).